We begin with the raw amino-acid sequence, 152 residues long: MTIWVDADACPNVIKEILYRAAERMQMPLVLVANQSLRVPPSRFIRTLHVAAGFDVADNEIVRQCEAGDLVITADIPLAAEAIEKGAAALNPRGERYTPATIRERLTMRDFMDTLRASGIQTGGPDSLSQRDRQAFAAELEKWWLEVQRSRG.

The protein belongs to the UPF0178 family.

The polypeptide is UPF0178 protein YaiI (Shigella boydii serotype 18 (strain CDC 3083-94 / BS512)).